A 287-amino-acid chain; its full sequence is U1 small nuclear ribonucleoprotein A (287 aa).

An RRM 1 domain is found at 16–95 (HTIYINNLNE…KPMRIQYAKT (80 aa)). Lys-66 carries the N6-acetyllysine modification. The interval 106-134 (TYVERDRKREKRKPKSQETPAAKKAVQGG) is disordered. Residues 125-134 (PAAKKAVQGG) are compositionally biased toward low complexity. At Arg-157 the chain carries Omega-N-methylarginine. In terms of domain architecture, RRM 2 spans 213-287 (HILFLTNLPE…NAMKISFAKK (75 aa)).

The protein belongs to the RRM U1 A/B'' family. U1 snRNP is composed of the 7 core Sm proteins SNRPB, SNRPD1, SNRPD2, SNRPD3, SNRPE, SNRPF and SNRPG that assemble in a heptameric protein ring on the Sm site of the small nuclear RNA to form the core snRNP, and at least three U1 snRNP-specific proteins SNRNP70/U1-70K, SNRPA/U1-A and SNRPC/U1-C. Interacts with SFPQ; component of a snRNP-free complex with SFPQ. Interacts with IVNS1ABP (via BACK domain); the interaction is indirect.

It is found in the nucleus. In terms of biological role, component of the spliceosomal U1 snRNP, which is essential for recognition of the pre-mRNA 5' splice-site and the subsequent assembly of the spliceosome. U1 snRNP is the first snRNP to interact with pre-mRNA. This interaction is required for the subsequent binding of U2 snRNP and the U4/U6/U5 tri-snRNP. SNRPA binds stem loop II of U1 snRNA. In a snRNP-free form (SF-A) may be involved in coupled pre-mRNA splicing and polyadenylation process. May bind preferentially to the 5'-UGCAC-3' motif on RNAs. This chain is U1 small nuclear ribonucleoprotein A (Snrpa), found in Mus musculus (Mouse).